Reading from the N-terminus, the 279-residue chain is Fatty acid metabolism regulator protein (279 aa).

An HTH gntR-type domain is found at 6–74 (KSPAGFAEKY…HGKPTKVNQF (69 aa)). The segment at residues 34–53 (ERELSELIGVTRTTLREVLQ) is a DNA-binding region (H-T-H motif).

In terms of assembly, homodimer.

Its subcellular location is the cytoplasm. Functionally, multifunctional regulator of fatty acid metabolism. The sequence is that of Fatty acid metabolism regulator protein from Vibrio vulnificus (strain CMCP6).